The primary structure comprises 1233 residues: DNA-directed RNA polymerase subunit beta' (1233 aa).

Zn(2+)-binding residues include Cys61, Cys63, Cys76, and Cys79. The Mg(2+) site is built by Asp455, Asp457, and Asp459. The Zn(2+) site is built by Cys824, Cys898, Cys905, and Cys908. A compositionally biased stretch (basic and acidic residues) spans 1211–1220 (ELQKAFDKEP). Residues 1211-1233 (ELQKAFDKEPASSTGNKASNSAK) are disordered. The segment covering 1221–1233 (ASSTGNKASNSAK) has biased composition (polar residues).

Belongs to the RNA polymerase beta' chain family. The RNAP catalytic core consists of 2 alpha, 1 beta, 1 beta' and 1 omega subunit. When a sigma factor is associated with the core the holoenzyme is formed, which can initiate transcription. Requires Mg(2+) as cofactor. The cofactor is Zn(2+).

It catalyses the reaction RNA(n) + a ribonucleoside 5'-triphosphate = RNA(n+1) + diphosphate. Functionally, DNA-dependent RNA polymerase catalyzes the transcription of DNA into RNA using the four ribonucleoside triphosphates as substrates. The sequence is that of DNA-directed RNA polymerase subunit beta' from Oenococcus oeni (strain ATCC BAA-331 / PSU-1).